The following is a 107-amino-acid chain: Iron-binding protein IscA (107 aa).

Residues Cys35, Cys99, and Cys101 each coordinate Fe cation.

The protein belongs to the HesB/IscA family. Homodimer; may form tetramers and higher multimers. The cofactor is Fe cation.

Functionally, is able to transfer iron-sulfur clusters to apo-ferredoxin. Multiple cycles of [2Fe2S] cluster formation and transfer are observed, suggesting that IscA acts catalytically. Recruits intracellular free iron so as to provide iron for the assembly of transient iron-sulfur cluster in IscU in the presence of IscS, L-cysteine and the thioredoxin reductase system TrxA/TrxB. The sequence is that of Iron-binding protein IscA from Klebsiella pneumoniae (strain 342).